Consider the following 252-residue polypeptide: Chitooligosaccharide deacetylase (252 aa).

The Mg(2+) site is built by H61 and H125.

The protein belongs to the YdjC deacetylase family. ChbG subfamily. Homodimer. Mg(2+) is required as a cofactor.

Its subcellular location is the cytoplasm. The catalysed reaction is N,N'-diacetylchitobiose + H2O = N-acetyl-beta-D-glucosaminyl-(1-&gt;4)-D-glucosamine + acetate. The enzyme catalyses diacetylchitobiose-6'-phosphate + H2O = N'-monoacetylchitobiose-6'-phosphate + acetate. It functions in the pathway glycan degradation; chitin degradation. In terms of biological role, involved in the degradation of chitin. ChbG is essential for growth on the acetylated chitooligosaccharides chitobiose and chitotriose but is dispensable for growth on cellobiose and chitosan dimer, the deacetylated form of chitobiose. Deacetylation of chitobiose-6-P and chitotriose-6-P is necessary for both the activation of the chb promoter by the regulatory protein ChbR and the hydrolysis of phosphorylated beta-glucosides by the phospho-beta-glucosidase ChbF. Catalyzes the removal of only one acetyl group from chitobiose-6-P to yield monoacetylchitobiose-6-P, the inducer of ChbR and the substrate of ChbF. The chain is Chitooligosaccharide deacetylase from Salmonella paratyphi A (strain ATCC 9150 / SARB42).